Reading from the N-terminus, the 258-residue chain is Imidazole glycerol phosphate synthase subunit HisF (258 aa).

Residues Asp-11 and Asp-130 contribute to the active site.

This sequence belongs to the HisA/HisF family. As to quaternary structure, heterodimer of HisH and HisF.

The protein localises to the cytoplasm. It carries out the reaction 5-[(5-phospho-1-deoxy-D-ribulos-1-ylimino)methylamino]-1-(5-phospho-beta-D-ribosyl)imidazole-4-carboxamide + L-glutamine = D-erythro-1-(imidazol-4-yl)glycerol 3-phosphate + 5-amino-1-(5-phospho-beta-D-ribosyl)imidazole-4-carboxamide + L-glutamate + H(+). It functions in the pathway amino-acid biosynthesis; L-histidine biosynthesis; L-histidine from 5-phospho-alpha-D-ribose 1-diphosphate: step 5/9. In terms of biological role, IGPS catalyzes the conversion of PRFAR and glutamine to IGP, AICAR and glutamate. The HisF subunit catalyzes the cyclization activity that produces IGP and AICAR from PRFAR using the ammonia provided by the HisH subunit. The polypeptide is Imidazole glycerol phosphate synthase subunit HisF (Methylorubrum extorquens (strain PA1) (Methylobacterium extorquens)).